Reading from the N-terminus, the 170-residue chain is Adenine phosphoribosyltransferase (170 aa).

This sequence belongs to the purine/pyrimidine phosphoribosyltransferase family. As to quaternary structure, homodimer.

It is found in the cytoplasm. It carries out the reaction AMP + diphosphate = 5-phospho-alpha-D-ribose 1-diphosphate + adenine. It functions in the pathway purine metabolism; AMP biosynthesis via salvage pathway; AMP from adenine: step 1/1. Its function is as follows. Catalyzes a salvage reaction resulting in the formation of AMP, that is energically less costly than de novo synthesis. In Geobacillus sp. (strain WCH70), this protein is Adenine phosphoribosyltransferase.